The following is a 72-amino-acid chain: Translation initiation factor IF-1 (72 aa).

In terms of domain architecture, S1-like spans Met1 to Lys72.

It belongs to the IF-1 family. Component of the 30S ribosomal translation pre-initiation complex which assembles on the 30S ribosome in the order IF-2 and IF-3, IF-1 and N-formylmethionyl-tRNA(fMet); mRNA recruitment can occur at any time during PIC assembly.

The protein localises to the cytoplasm. Its function is as follows. One of the essential components for the initiation of protein synthesis. Stabilizes the binding of IF-2 and IF-3 on the 30S subunit to which N-formylmethionyl-tRNA(fMet) subsequently binds. Helps modulate mRNA selection, yielding the 30S pre-initiation complex (PIC). Upon addition of the 50S ribosomal subunit IF-1, IF-2 and IF-3 are released leaving the mature 70S translation initiation complex. The chain is Translation initiation factor IF-1 from Gluconobacter oxydans (strain 621H) (Gluconobacter suboxydans).